The following is a 545-amino-acid chain: Pseudouridylate synthase RPUSD2 (545 aa).

The interval 48 to 121 (GLRASHQQNG…PPPKKRRTGV (74 aa)) is disordered. Ser-68 is subject to Phosphoserine. Asp-274 is a catalytic residue. Residue Thr-477 is modified to Phosphothreonine.

Belongs to the pseudouridine synthase RluA family.

It carries out the reaction a uridine in mRNA = a pseudouridine in mRNA. Functionally, pseudouridine synthase that catalyzes pseudouridylation of mRNAs. This chain is Pseudouridylate synthase RPUSD2, found in Homo sapiens (Human).